Reading from the N-terminus, the 192-residue chain is Nucleoside triphosphate pyrophosphatase (192 aa).

Residue aspartate 73 is the Proton acceptor of the active site.

The protein belongs to the Maf family. A divalent metal cation serves as cofactor.

It localises to the cytoplasm. The catalysed reaction is a ribonucleoside 5'-triphosphate + H2O = a ribonucleoside 5'-phosphate + diphosphate + H(+). The enzyme catalyses a 2'-deoxyribonucleoside 5'-triphosphate + H2O = a 2'-deoxyribonucleoside 5'-phosphate + diphosphate + H(+). In terms of biological role, nucleoside triphosphate pyrophosphatase. May have a dual role in cell division arrest and in preventing the incorporation of modified nucleotides into cellular nucleic acids. The chain is Nucleoside triphosphate pyrophosphatase from Ehrlichia ruminantium (strain Gardel).